A 120-amino-acid chain; its full sequence is Small ribosomal subunit protein eS17 (120 aa).

The protein belongs to the eukaryotic ribosomal protein eS17 family. In terms of assembly, component of the small ribosomal subunit.

The protein localises to the cytoplasm. The chain is Small ribosomal subunit protein eS17 (RPS17) from Encephalitozoon cuniculi (strain GB-M1) (Microsporidian parasite).